The sequence spans 214 residues: Thiamine-phosphate synthase (214 aa).

4-amino-2-methyl-5-(diphosphooxymethyl)pyrimidine is bound by residues 37 to 41 (QYREK) and asparagine 73. Mg(2+) is bound by residues aspartate 74 and aspartate 93. Serine 112 is a 4-amino-2-methyl-5-(diphosphooxymethyl)pyrimidine binding site. Residue 139-141 (TIS) coordinates 2-[(2R,5Z)-2-carboxy-4-methylthiazol-5(2H)-ylidene]ethyl phosphate. Lysine 142 contacts 4-amino-2-methyl-5-(diphosphooxymethyl)pyrimidine. 2-[(2R,5Z)-2-carboxy-4-methylthiazol-5(2H)-ylidene]ethyl phosphate contacts are provided by residues glycine 171 and 191–192 (IS).

Belongs to the thiamine-phosphate synthase family. Mg(2+) serves as cofactor.

The enzyme catalyses 2-[(2R,5Z)-2-carboxy-4-methylthiazol-5(2H)-ylidene]ethyl phosphate + 4-amino-2-methyl-5-(diphosphooxymethyl)pyrimidine + 2 H(+) = thiamine phosphate + CO2 + diphosphate. The catalysed reaction is 2-(2-carboxy-4-methylthiazol-5-yl)ethyl phosphate + 4-amino-2-methyl-5-(diphosphooxymethyl)pyrimidine + 2 H(+) = thiamine phosphate + CO2 + diphosphate. It catalyses the reaction 4-methyl-5-(2-phosphooxyethyl)-thiazole + 4-amino-2-methyl-5-(diphosphooxymethyl)pyrimidine + H(+) = thiamine phosphate + diphosphate. It participates in cofactor biosynthesis; thiamine diphosphate biosynthesis; thiamine phosphate from 4-amino-2-methyl-5-diphosphomethylpyrimidine and 4-methyl-5-(2-phosphoethyl)-thiazole: step 1/1. Functionally, condenses 4-methyl-5-(beta-hydroxyethyl)thiazole monophosphate (THZ-P) and 2-methyl-4-amino-5-hydroxymethyl pyrimidine pyrophosphate (HMP-PP) to form thiamine monophosphate (TMP). The polypeptide is Thiamine-phosphate synthase (Listeria monocytogenes serovar 1/2a (strain ATCC BAA-679 / EGD-e)).